The sequence spans 209 residues: Uracil phosphoribosyltransferase (209 aa).

Residues Arg-79, Arg-104, and 131-139 (DPMLATGGS) contribute to the 5-phospho-alpha-D-ribose 1-diphosphate site. Residues Val-194 and 199–201 (GDA) contribute to the uracil site. Asp-200 lines the 5-phospho-alpha-D-ribose 1-diphosphate pocket.

It belongs to the UPRTase family. Mg(2+) is required as a cofactor.

It catalyses the reaction UMP + diphosphate = 5-phospho-alpha-D-ribose 1-diphosphate + uracil. It participates in pyrimidine metabolism; UMP biosynthesis via salvage pathway; UMP from uracil: step 1/1. With respect to regulation, allosterically activated by GTP. Functionally, catalyzes the conversion of uracil and 5-phospho-alpha-D-ribose 1-diphosphate (PRPP) to UMP and diphosphate. The chain is Uracil phosphoribosyltransferase from Bacillus cytotoxicus (strain DSM 22905 / CIP 110041 / 391-98 / NVH 391-98).